Here is a 413-residue protein sequence, read N- to C-terminus: Intracellular hyaluronan-binding protein 4 (413 aa).

Phosphoserine occurs at positions 7 and 36. The stretch at 40–64 (DILREAERRRQQQLQRKRRDEAAAA) forms a coiled coil. The segment at 42-206 (LREAERRRQQ…RGGPGNRVFD (165 aa)) is disordered. The segment covering 62 to 82 (AAAAGAGPRGGRSPAGASGHR) has biased composition (low complexity). Arg-70 is subject to Omega-N-methylarginine. At Ser-74 the chain carries Phosphoserine. Basic and acidic residues predominate over residues 87 to 97 (GRRESQKERKS). A Phosphoserine modification is found at Ser-108. Residues 139-182 (MLERAERRSYREYRPYETERQADFTAEKFPDEKPGDRFDRDRPL) show a composition bias toward basic and acidic residues. The span at 184–201 (GRGGPRGGMRGRGRGGPG) shows a compositional bias: gly residues. Glycyl lysine isopeptide (Lys-Gly) (interchain with G-Cter in SUMO1); alternate cross-links involve residues Lys-213 and Lys-276. Residues Lys-213 and Lys-276 each participate in a glycyl lysine isopeptide (Lys-Gly) (interchain with G-Cter in SUMO2); alternate cross-link. Residues 227–320 (VRTEDNMGGC…IRKPESTVPS (94 aa)) are disordered. The segment covering 294–315 (DEWKNLQEQTRPKPEFNIRKPE) has biased composition (basic and acidic residues). Lys-336 participates in a covalent cross-link: Glycyl lysine isopeptide (Lys-Gly) (interchain with G-Cter in SUMO1); alternate. A Glycyl lysine isopeptide (Lys-Gly) (interchain with G-Cter in SUMO2); alternate cross-link involves residue Lys-336. Phosphothreonine; by PKC occurs at positions 354 and 375. The interval 360–413 (NFGNLPRPGRGARGGTRGGRGRIRRAENYGPRAEVVMQDVAPNPDDPEDFPALS) is disordered. Positions 404–413 (DDPEDFPALS) are enriched in acidic residues.

It belongs to the SERBP1-HABP4 family. As to quaternary structure, associates with ribosomes; promoting ribosome stabilization. Interacts with EEF2/eEF2; promoting ribosome stabilization. Interacts with FMR1. Interacts with FXR1 and FXR2. Interacts with CHD3 (via C-terminus). Interacts (via C-terminus) with RACK1. Interacts with p53/TP53. Interacts (via N-terminus) with SRSF9; this interaction is direct. Interacts with SYNCRIP; this interaction is direct. Interacts with MEF2C (via N-terminus); this interaction decreases DNA-binding activity of MEF2C in myocardial cells in response to mechanical stress. Interacts with PRMT1 (via N-terminus). Interacts with SPIN1. In terms of processing, methylated. Methylation is decreased by phorbol 12-myristate 13-acetate (PMA)-activated PKC, in vitro. Post-translationally, phosphorylated by phorbol 12-myristate 13-acetate (PMA)-activated PKC isoforms at Thr-354 and Thr-375. As to expression, highly expressed in brain, heart, and kidney, and moderately expressed in skeletal muscle. Also expressed in a variety of tumor cell lines and in activated but not resting leukocytes.

It localises to the nucleus. Its subcellular location is the cytoplasm. It is found in the stress granule. The protein resides in the sarcoplasm. The protein localises to the nuclear body. It localises to the nucleolus. Its subcellular location is the nucleus speckle. It is found in the cajal body. The protein resides in the gem. Its function is as follows. Ribosome-binding protein that promotes ribosome hibernation, a process during which ribosomes are stabilized in an inactive state and preserved from proteasomal degradation. Acts via its association with EEF2/eEF2 factor at the A-site of the ribosome, promoting ribosome stabilization in an inactive state compatible with storage. Plays a key role in ribosome hibernation in the mature oocyte by promoting ribosome stabilization. Ribosomes, which are produced in large quantities during oogenesis, are stored and translationally repressed in the oocyte and early embryo. Also binds RNA, regulating transcription and pre-mRNA splicing. Binds (via C-terminus) to poly(U) RNA. Seems to play a role in PML-nuclear bodies formation. Negatively regulates DNA-binding activity of the transcription factor MEF2C in myocardial cells in response to mechanical stress. The protein is Intracellular hyaluronan-binding protein 4 of Homo sapiens (Human).